We begin with the raw amino-acid sequence, 392 residues long: 2,3-bisphosphoglycerate-independent phosphoglycerate mutase (392 aa).

The protein belongs to the BPG-independent phosphoglycerate mutase family. A-PGAM subfamily.

It carries out the reaction (2R)-2-phosphoglycerate = (2R)-3-phosphoglycerate. The protein operates within carbohydrate degradation; glycolysis; pyruvate from D-glyceraldehyde 3-phosphate: step 3/5. Catalyzes the interconversion of 2-phosphoglycerate and 3-phosphoglycerate. In Methanothrix thermoacetophila (strain DSM 6194 / JCM 14653 / NBRC 101360 / PT) (Methanosaeta thermophila), this protein is 2,3-bisphosphoglycerate-independent phosphoglycerate mutase.